Reading from the N-terminus, the 289-residue chain is Cell division protein ZipA (289 aa).

A topological domain (periplasmic) is located at residue methionine 1. A helical membrane pass occupies residues 2-22; sequence DIGLREWLIVIGLIVIAGILF. The Cytoplasmic portion of the chain corresponds to 23-289; the sequence is DGWRRMRGGK…HERRSLMQKR (267 aa). Residues 65 to 141 are disordered; it reads HREPSFDEQD…KEREKAPAVA (77 aa). The segment covering 81 to 99 has biased composition (basic and acidic residues); sequence RETKERKGGKRQEEPRQGD. Over residues 100 to 114 the composition is skewed to acidic residues; sequence LDLDEGLALEADPSD.

This sequence belongs to the ZipA family. In terms of assembly, interacts with FtsZ via their C-terminal domains.

The protein localises to the cell inner membrane. Essential cell division protein that stabilizes the FtsZ protofilaments by cross-linking them and that serves as a cytoplasmic membrane anchor for the Z ring. Also required for the recruitment to the septal ring of downstream cell division proteins. The protein is Cell division protein ZipA of Pseudomonas aeruginosa (strain UCBPP-PA14).